The primary structure comprises 552 residues: Steroid transmembrane transporter SLC22A24 (552 aa).

12 helical membrane passes run 16-36 (FQIC…PNIV), 146-166 (SMVQ…YGHL), 178-200 (LCFL…LVYC), 204-226 (FLAG…EWTL), 234-254 (IMVL…LAFA), 260-280 (ILQL…WKMV), 350-370 (VFGL…LILN), 380-400 (LFQI…LLTL), 407-427 (ISQI…TFLP), 435-455 (VVLA…ASVH), 474-492 (VSGR…LMAY), and 496-516 (LPWI…LLLP).

This sequence belongs to the major facilitator (TC 2.A.1) superfamily. Organic cation transporter (TC 2.A.1.19) family. In terms of tissue distribution, localized to the kidney. Highly specific expression pattern in the nephron, localized to segment 3 of the proximal tubule.

Its subcellular location is the cell membrane. It catalyses the reaction estrone 3-sulfate(out) + glutarate(in) = estrone 3-sulfate(in) + glutarate(out). It carries out the reaction 17beta-estradiol 17-O-(beta-D-glucuronate)(out) + glutarate(in) = 17beta-estradiol 17-O-(beta-D-glucuronate)(in) + glutarate(out). The enzyme catalyses taurocholate(out) + glutarate(in) = taurocholate(in) + glutarate(out). The catalysed reaction is 5alpha-androstane-3alpha,17beta-diol 3-O-(beta-D-glucuronate)(out) + glutarate(in) = 5alpha-androstane-3alpha,17beta-diol 3-O-(beta-D-glucuronate)(in) + glutarate(out). It catalyses the reaction glycocholate(out) + glutarate(in) = glycocholate(in) + glutarate(out). It carries out the reaction dehydroepiandrosterone 3-sulfate(out) + glutarate(in) = dehydroepiandrosterone 3-sulfate(in) + glutarate(out). The enzyme catalyses glutarate(in) + succinate(out) = glutarate(out) + succinate(in). With respect to regulation, transport is chloride sensitive and transtimulated by glutaric acid. Transport is inhibited by anionic compounds from different chemical classes. Functionally, renal transmembrane organic anion/dicarboxylate exchanger that participates in the reabsorption of conjugated steroids including estradiol-17beta-D-glucuronide (or 17beta-estradiol 17-O-(beta-D-glucuronate)), androstanediol glucuronide (or 5alpha-androstane-3alpha,17beta-diol 3-O-(beta-D-glucuronate)), and estrone 3-sulfate, as well as bile acids taurocholate and glycocholate, driven by an outward gradient of dicarboxylates such as glutarate or succinate. Its function is as follows. Similar uptake function as Isoform 1. Lack of transporter activity. In Homo sapiens (Human), this protein is Steroid transmembrane transporter SLC22A24.